A 156-amino-acid polypeptide reads, in one-letter code: Small ribosomal subunit protein uS7 (156 aa).

The protein belongs to the universal ribosomal protein uS7 family. In terms of assembly, part of the 30S ribosomal subunit. Contacts proteins S9 and S11.

Its function is as follows. One of the primary rRNA binding proteins, it binds directly to 16S rRNA where it nucleates assembly of the head domain of the 30S subunit. Is located at the subunit interface close to the decoding center, probably blocks exit of the E-site tRNA. In Wigglesworthia glossinidia brevipalpis, this protein is Small ribosomal subunit protein uS7.